The sequence spans 546 residues: Probable acyl-activating enzyme 21 (546 aa).

It belongs to the ATP-dependent AMP-binding enzyme family.

Functionally, may act as an acid--thiol ligase that activates carboxylic acids by forming acyl-CoAs. This Arabidopsis thaliana (Mouse-ear cress) protein is Probable acyl-activating enzyme 21 (AEE21).